Reading from the N-terminus, the 44-residue chain is pyr operon leader peptide (44 aa).

This is pyr operon leader peptide (pyrL) from Shigella flexneri.